A 183-amino-acid chain; its full sequence is TATA-box-binding protein (183 aa).

2 tandem repeats follow at residues 7 to 83 (IENV…ARTL) and 99 to 177 (VQNI…RQQL).

It belongs to the TBP family.

Functionally, general factor that plays a role in the activation of archaeal genes transcribed by RNA polymerase. Binds specifically to the TATA box promoter element which lies close to the position of transcription initiation. This is TATA-box-binding protein from Methanothrix thermoacetophila (strain DSM 6194 / JCM 14653 / NBRC 101360 / PT) (Methanosaeta thermophila).